Reading from the N-terminus, the 220-residue chain is ATP-dependent dethiobiotin synthetase BioD (220 aa).

12–17 (DVGKTI) contacts ATP. Mg(2+) is bound at residue Thr16. The active site involves Lys37. Thr41 contributes to the substrate binding site. Residues Asp49, 107-110 (EGAG), 167-168 (GS), and 197-199 (PAG) each bind ATP. 2 residues coordinate Mg(2+): Asp49 and Glu107.

Belongs to the dethiobiotin synthetase family. As to quaternary structure, homodimer. Mg(2+) serves as cofactor.

The protein resides in the cytoplasm. The enzyme catalyses (7R,8S)-7,8-diammoniononanoate + CO2 + ATP = (4R,5S)-dethiobiotin + ADP + phosphate + 3 H(+). The protein operates within cofactor biosynthesis; biotin biosynthesis; biotin from 7,8-diaminononanoate: step 1/2. Catalyzes a mechanistically unusual reaction, the ATP-dependent insertion of CO2 between the N7 and N8 nitrogen atoms of 7,8-diaminopelargonic acid (DAPA, also called 7,8-diammoniononanoate) to form a ureido ring. The chain is ATP-dependent dethiobiotin synthetase BioD from Corynebacterium efficiens (strain DSM 44549 / YS-314 / AJ 12310 / JCM 11189 / NBRC 100395).